A 483-amino-acid chain; its full sequence is ATP synthase subunit beta (483 aa).

169–176 (GGAGVGKT) lines the ATP pocket.

Belongs to the ATPase alpha/beta chains family. F-type ATPases have 2 components, CF(1) - the catalytic core - and CF(0) - the membrane proton channel. CF(1) has five subunits: alpha(3), beta(3), gamma(1), delta(1), epsilon(1). CF(0) has three main subunits: a(1), b(2) and c(9-12). The alpha and beta chains form an alternating ring which encloses part of the gamma chain. CF(1) is attached to CF(0) by a central stalk formed by the gamma and epsilon chains, while a peripheral stalk is formed by the delta and b chains.

Its subcellular location is the cell membrane. It carries out the reaction ATP + H2O + 4 H(+)(in) = ADP + phosphate + 5 H(+)(out). Produces ATP from ADP in the presence of a proton gradient across the membrane. The catalytic sites are hosted primarily by the beta subunits. The sequence is that of ATP synthase subunit beta from Rhodococcus erythropolis (strain PR4 / NBRC 100887).